The primary structure comprises 469 residues: Probable periplasmic serine endoprotease DegP-like (469 aa).

The N-terminal stretch at 1–25 (MNRLLKQVCMVVVSSFMMASMLTHA) is a signal peptide. Active-site charge relay system residues include H114, D144, and S217. Residues 215–217 (GNS) and 272–276 (LGVLI) contribute to the substrate site. PDZ domains lie at 261–352 (LKSD…YRDG) and 358–458 (SVTL…IRQG).

It belongs to the peptidase S1C family.

The protein resides in the periplasm. It catalyses the reaction Acts on substrates that are at least partially unfolded. The cleavage site P1 residue is normally between a pair of hydrophobic residues, such as Val-|-Val.. Might be efficient in the degradation of transiently denatured and unfolded proteins which accumulate in the periplasm following stress conditions. This Marinomonas sp. (strain MWYL1) protein is Probable periplasmic serine endoprotease DegP-like.